The primary structure comprises 427 residues: Trigger factor (427 aa).

A PPIase FKBP-type domain is found at Gly163–Pro248.

The protein belongs to the FKBP-type PPIase family. Tig subfamily.

It localises to the cytoplasm. It catalyses the reaction [protein]-peptidylproline (omega=180) = [protein]-peptidylproline (omega=0). Functionally, involved in protein export. Acts as a chaperone by maintaining the newly synthesized protein in an open conformation. Functions as a peptidyl-prolyl cis-trans isomerase. The sequence is that of Trigger factor from Streptococcus pneumoniae (strain JJA).